The sequence spans 227 residues: LexA repressor (227 aa).

Positions 25-45 form a DNA-binding region, H-T-H motif; that stretch reads FDEMKDALDLRSKSGIHRLIT. Active-site for autocatalytic cleavage activity residues include serine 148 and lysine 186.

The protein belongs to the peptidase S24 family. As to quaternary structure, homodimer.

It catalyses the reaction Hydrolysis of Ala-|-Gly bond in repressor LexA.. Functionally, represses a number of genes involved in the response to DNA damage (SOS response), including recA and lexA. In the presence of single-stranded DNA, RecA interacts with LexA causing an autocatalytic cleavage which disrupts the DNA-binding part of LexA, leading to derepression of the SOS regulon and eventually DNA repair. In Cereibacter sphaeroides (strain ATCC 17029 / ATH 2.4.9) (Rhodobacter sphaeroides), this protein is LexA repressor.